The primary structure comprises 506 residues: UBX domain-containing protein 4 (506 aa).

Residues 1 to 199 (MLWFQGAIPA…PAEDLTVRVE (199 aa)) form an interaction with UBQLN1 region. The Cytoplasmic segment spans residues 1 to 411 (MLWFQGAIPA…VPSSSGDIWT (411 aa)). 2 stretches are compositionally biased toward polar residues: residues 114–136 (SLKGETSVTNDKQSESSVSTPSA) and 177–189 (SLSQEPPGCSNQR). The segment at 114 to 193 (SLKGETSVTN…GCSNQRPAED (80 aa)) is disordered. Residues 313–391 (DRSTIARIQF…ELAPSASVVL (79 aa)) form the UBX domain. The stretch at 412–432 (LLGTVLYPFLAIWRLISNFLF) is an intramembrane region. At 433 to 506 (SNPPPAQTSA…TWNGNSTQQM (74 aa)) the chain is on the cytoplasmic side. A disordered region spans residues 437 to 506 (PAQTSARATS…TWNGNSTQQM (70 aa)). The span at 444-456 (ATSTEPSNSASSS) shows a compositional bias: low complexity. A compositionally biased stretch (basic and acidic residues) spans 457 to 489 (KSEKREPVRKRVLEKRGEDFKKEGKIYRLRTQD). Residue T487 is modified to Phosphothreonine. Residues 496-506 (NTWNGNSTQQM) are compositionally biased toward polar residues.

In terms of assembly, directly interacts with VCP. Interacts with UBQLN1. Forms a complex with VCP and UBQLN1.

It is found in the endoplasmic reticulum membrane. The protein localises to the nucleus envelope. In terms of biological role, involved in endoplasmic reticulum-associated protein degradation (ERAD). Acts as a platform to recruit both UBQLN1 and VCP to the ER during ERAD. This is UBX domain-containing protein 4 (Ubxn4) from Rattus norvegicus (Rat).